Consider the following 324-residue polypeptide: tRNA U34 carboxymethyltransferase (324 aa).

Carboxy-S-adenosyl-L-methionine contacts are provided by residues lysine 92, tryptophan 106, lysine 111, glycine 131, leucine 181–glutamate 182, methionine 197, tyrosine 201, and arginine 316.

Belongs to the class I-like SAM-binding methyltransferase superfamily. CmoB family. In terms of assembly, homotetramer.

The catalysed reaction is carboxy-S-adenosyl-L-methionine + 5-hydroxyuridine(34) in tRNA = 5-carboxymethoxyuridine(34) in tRNA + S-adenosyl-L-homocysteine + H(+). Functionally, catalyzes carboxymethyl transfer from carboxy-S-adenosyl-L-methionine (Cx-SAM) to 5-hydroxyuridine (ho5U) to form 5-carboxymethoxyuridine (cmo5U) at position 34 in tRNAs. The polypeptide is tRNA U34 carboxymethyltransferase (Syntrophotalea carbinolica (strain DSM 2380 / NBRC 103641 / GraBd1) (Pelobacter carbinolicus)).